The following is a 669-amino-acid chain: DNA ligase (669 aa).

NAD(+) is bound by residues 34–38 (DAEYD), 83–84 (SL), and glutamate 114. The active-site N6-AMP-lysine intermediate is lysine 116. 4 residues coordinate NAD(+): arginine 137, glutamate 171, lysine 287, and lysine 311. Residues cysteine 405, cysteine 408, cysteine 423, and cysteine 428 each contribute to the Zn(2+) site. A BRCT domain is found at 591–669 (NVESYFAGKT…EERFLQELNK (79 aa)).

It belongs to the NAD-dependent DNA ligase family. LigA subfamily. Requires Mg(2+) as cofactor. It depends on Mn(2+) as a cofactor.

It catalyses the reaction NAD(+) + (deoxyribonucleotide)n-3'-hydroxyl + 5'-phospho-(deoxyribonucleotide)m = (deoxyribonucleotide)n+m + AMP + beta-nicotinamide D-nucleotide.. In terms of biological role, DNA ligase that catalyzes the formation of phosphodiester linkages between 5'-phosphoryl and 3'-hydroxyl groups in double-stranded DNA using NAD as a coenzyme and as the energy source for the reaction. It is essential for DNA replication and repair of damaged DNA. In Bacillus anthracis (strain A0248), this protein is DNA ligase.